The following is a 158-amino-acid chain: U4/U6.U5 small nuclear ribonucleoprotein 27 kDa protein (158 aa).

Over residues Met1 to Glu30 the composition is skewed to basic residues. Residues Met1–Thr100 are disordered. Residues Arg31–Arg41 show a composition bias toward basic and acidic residues. Basic residues predominate over residues Arg42–Ser62. The span at Arg69–Ala86 shows a compositional bias: basic and acidic residues.

It belongs to the SNUT3 family. As to quaternary structure, part of a tri-snRNP complex.

It localises to the nucleus. May play a role in mRNA splicing. This chain is U4/U6.U5 small nuclear ribonucleoprotein 27 kDa protein (snrnp27), found in Danio rerio (Zebrafish).